The chain runs to 135 residues: uncharacterized protein (135 aa).

2 consecutive transmembrane segments (helical) span residues Ile11–Ile31 and Leu57–Ile77.

The protein localises to the cell membrane. This is an uncharacterized protein from Methanocaldococcus jannaschii (strain ATCC 43067 / DSM 2661 / JAL-1 / JCM 10045 / NBRC 100440) (Methanococcus jannaschii).